The following is a 155-amino-acid chain: uncharacterized protein (155 aa).

The span at 1–14 shows a compositional bias: polar residues; the sequence is MLTLSGWITTQVPP. The disordered stretch occupies residues 1 to 44; sequence MLTLSGWITTQVPPSSRAAADAKAARTGTAEQAEDPAAGTDAAD. Residues 17–30 are compositionally biased toward low complexity; the sequence is RAAADAKAARTGTA.

This is an uncharacterized protein from Pseudomonas aeruginosa (strain ATCC 15692 / DSM 22644 / CIP 104116 / JCM 14847 / LMG 12228 / 1C / PRS 101 / PAO1).